The following is a 252-amino-acid chain: Mitochondrial cardiolipin hydrolase (252 aa).

The Mitochondrial intermembrane portion of the chain corresponds to 1–4 (MGRL). A required for mitochondrial localization region spans residues 1 to 39 (MGRLSWQVAAAAAVGLALTLEALPWVLRWLRSRRRRPRR). Residues 5-27 (SWQVAAAAAVGLALTLEALPWVL) traverse the membrane as a helical segment. Residues 28–252 (RWLRSRRRRP…TCGTSSESQT (225 aa)) lie on the Cytoplasmic side of the membrane. Residues 45–78 (PSQVTCTEALLRAPGAELAELPEGCPCGLPHGES) form a C3H1-type; atypical zinc finger. The 28-residue stretch at 151–178 (DPGYMHHKFAIVDKRVLITGSLNWTTQA) folds into the PLD phosphodiesterase domain. Catalysis depends on residues H156, K158, and D163.

The protein belongs to the phospholipase D family. MitoPLD/Zucchini subfamily. In terms of assembly, homodimer. Interacts with MOV10L1. Interacts with MIGA1 and MIGA2; possibly facilitating homodimer formation. Interacts with GK2. As to expression, predominantly expressed in testis and ovary, but not limited to gonads (at protein level). It is also found in brain, heart, pituitary gland, prostate, pancreas, thyroid, bone marrow, lung and muscle.

The protein resides in the mitochondrion outer membrane. It localises to the golgi apparatus. It catalyses the reaction a cardiolipin + H2O = a 1,2-diacyl-sn-glycero-3-phospho-(1'-sn-glycerol) + a 1,2-diacyl-sn-glycero-3-phosphate + H(+). MYC stimulates its phospholipase activity. MIGA1 and MIGA2 increase PLD6 self-association affinity and affects the homodimer conformation facilitating its phospholipase activity over the nuclease activity. Single stranded DNA (ssDNA) hydrolase activity does not depend upon, but is stimulated by the presence of Ca(2+) and Mn(2+). Its function is as follows. Presents phospholipase and nuclease activities, depending on the different physiological conditions. Interaction with Mitoguardin (MIGA1 or MIGA2) affects the dimer conformation, facilitating the lipase activity over the nuclease activity. Plays a key role in mitochondrial fusion and fission via its phospholipase activity. In its phospholipase role, it uses the mitochondrial lipid cardiolipin as substrate to generate phosphatidate (PA or 1,2-diacyl-sn-glycero-3-phosphate), a second messenger signaling lipid. Production of PA facilitates Mitofusin-mediated fusion, whereas the cleavage of PA by the Lipin family of phosphatases produces diacylgycerol (DAG) which promotes mitochondrial fission. Both Lipin and DAG regulate mitochondrial dynamics and membrane fusion/fission, important processes for adapting mitochondrial metabolism to changes in cell physiology. Mitochondrial fusion enables cells to cope with the increased nucleotide demand during DNA synthesis. Mitochondrial function and dynamics are closely associated with biological processes such as cell growth, proliferation, and differentiation. Mediator of MYC activity, promotes mitochondrial fusion and activates AMPK which in turn inhibits YAP/TAZ, thereby inducing cell growth and proliferation. The endonuclease activity plays a critical role in PIWI-interacting RNA (piRNA) biogenesis during spermatogenesis. Implicated in spermatogenesis and sperm fertility in testicular germ cells, its single strand-specific nuclease activity is critical for the biogenesis/maturation of PIWI-interacting RNA (piRNA). MOV10L1 selectively binds to piRNA precursors and funnels them to the endonuclease that catalyzes the first cleavage step of piRNA processing to generate piRNA intermediate fragments that are subsequently loaded to Piwi proteins. Cleaves either DNA or RNA substrates with similar affinity, producing a 5' phosphate end, in this way it participates in the processing of primary piRNA transcripts. piRNAs provide essential protection against the activity of mobile genetic elements. piRNA-mediated transposon silencing is thus critical for maintaining genome stability, in particular in germline cells when transposons are mobilized as a consequence of wide-spread genomic demethylation. PA may act as signaling molecule in the recognition/transport of the precursor RNAs of primary piRNAs. Interacts with tesmin in testes, suggesting a role in spermatogenesis via association with its interacting partner. This is Mitochondrial cardiolipin hydrolase (PLD6) from Homo sapiens (Human).